Consider the following 77-residue polypeptide: SS18-like protein 2 (77 aa).

An SH2-binding motif is present at residues 50-53 (YQHV).

The protein belongs to the SS18 family.

This chain is SS18-like protein 2 (Ss18l2), found in Mus musculus (Mouse).